We begin with the raw amino-acid sequence, 847 residues long: Leucine--tRNA ligase (847 aa).

Residues Pro-41–His-51 carry the 'HIGH' region motif. The 'KMSKS' region signature appears at Lys-619–Ser-623. Lys-622 contributes to the ATP binding site.

Belongs to the class-I aminoacyl-tRNA synthetase family.

The protein resides in the cytoplasm. It catalyses the reaction tRNA(Leu) + L-leucine + ATP = L-leucyl-tRNA(Leu) + AMP + diphosphate. This chain is Leucine--tRNA ligase, found in Cereibacter sphaeroides (strain ATCC 17023 / DSM 158 / JCM 6121 / CCUG 31486 / LMG 2827 / NBRC 12203 / NCIMB 8253 / ATH 2.4.1.) (Rhodobacter sphaeroides).